Consider the following 311-residue polypeptide: GTP cyclohydrolase FolE2 (311 aa).

The protein belongs to the GTP cyclohydrolase IV family.

The catalysed reaction is GTP + H2O = 7,8-dihydroneopterin 3'-triphosphate + formate + H(+). It participates in cofactor biosynthesis; 7,8-dihydroneopterin triphosphate biosynthesis; 7,8-dihydroneopterin triphosphate from GTP: step 1/1. Its function is as follows. Converts GTP to 7,8-dihydroneopterin triphosphate. In Hydrogenovibrio crunogenus (strain DSM 25203 / XCL-2) (Thiomicrospira crunogena), this protein is GTP cyclohydrolase FolE2.